The primary structure comprises 354 residues: V-type proton ATPase subunit C (354 aa).

It belongs to the V-ATPase C subunit family. As to quaternary structure, V-ATPase is a heteromultimeric enzyme composed of a peripheral catalytic V1 complex (components A to H) attached to an integral membrane V0 proton pore complex (components: a, c, c', c'' and d).

The protein resides in the vacuole membrane. Subunit of the peripheral V1 complex of vacuolar ATPase. Subunit C is necessary for the assembly of the catalytic sector of the enzyme and is likely to have a specific function in its catalytic activity. V-ATPase is responsible for acidifying a variety of intracellular compartments in eukaryotic cells. This chain is V-type proton ATPase subunit C (VATC), found in Hordeum vulgare (Barley).